The primary structure comprises 339 residues: Ketol-acid reductoisomerase (NADP(+)) (339 aa).

The 182-residue stretch at 1–182 (MRVYYDRDAD…GGGRSGIIET (182 aa)) folds into the KARI N-terminal Rossmann domain. Residues 24 to 27 (YGSQ), arginine 48, serine 51, serine 53, and 83 to 86 (DELQ) each bind NADP(+). Residue histidine 108 is part of the active site. Position 134 (glycine 134) interacts with NADP(+). The region spanning 183–328 (TFREECETDL…GRLRAMMPWI (146 aa)) is the KARI C-terminal knotted domain. 4 residues coordinate Mg(2+): aspartate 191, glutamate 195, glutamate 227, and glutamate 231. Serine 252 is a substrate binding site.

This sequence belongs to the ketol-acid reductoisomerase family. It depends on Mg(2+) as a cofactor.

It catalyses the reaction (2R)-2,3-dihydroxy-3-methylbutanoate + NADP(+) = (2S)-2-acetolactate + NADPH + H(+). The enzyme catalyses (2R,3R)-2,3-dihydroxy-3-methylpentanoate + NADP(+) = (S)-2-ethyl-2-hydroxy-3-oxobutanoate + NADPH + H(+). Its pathway is amino-acid biosynthesis; L-isoleucine biosynthesis; L-isoleucine from 2-oxobutanoate: step 2/4. It functions in the pathway amino-acid biosynthesis; L-valine biosynthesis; L-valine from pyruvate: step 2/4. Its function is as follows. Involved in the biosynthesis of branched-chain amino acids (BCAA). Catalyzes an alkyl-migration followed by a ketol-acid reduction of (S)-2-acetolactate (S2AL) to yield (R)-2,3-dihydroxy-isovalerate. In the isomerase reaction, S2AL is rearranged via a Mg-dependent methyl migration to produce 3-hydroxy-3-methyl-2-ketobutyrate (HMKB). In the reductase reaction, this 2-ketoacid undergoes a metal-dependent reduction by NADPH to yield (R)-2,3-dihydroxy-isovalerate. This is Ketol-acid reductoisomerase (NADP(+)) from Rhodospirillum rubrum (strain ATCC 11170 / ATH 1.1.1 / DSM 467 / LMG 4362 / NCIMB 8255 / S1).